A 243-amino-acid polypeptide reads, in one-letter code: Adenosine 5'-phosphosulfate reductase (243 aa).

It belongs to the PAPS reductase family. CysH subfamily. Requires [4Fe-4S] cluster as cofactor.

It localises to the cytoplasm. The enzyme catalyses [thioredoxin]-disulfide + sulfite + AMP + 2 H(+) = adenosine 5'-phosphosulfate + [thioredoxin]-dithiol. Its pathway is sulfur metabolism; hydrogen sulfide biosynthesis; sulfite from sulfate. Its function is as follows. Catalyzes the formation of sulfite from adenosine 5'-phosphosulfate (APS) using thioredoxin as an electron donor. The protein is Adenosine 5'-phosphosulfate reductase of Staphylococcus haemolyticus (strain JCSC1435).